A 434-amino-acid polypeptide reads, in one-letter code: Enolase (434 aa).

Residues His-158 and Glu-167 each coordinate substrate. Glu-210 functions as the Proton donor in the catalytic mechanism. Mg(2+)-binding residues include Asp-245, Glu-294, and Asp-319. Substrate-binding residues include Glu-294 and Asp-319. Lys-344 functions as the Proton acceptor in the catalytic mechanism. Substrate is bound by residues Ser-371–Ser-374 and Lys-395.

It belongs to the enolase family. In terms of assembly, homodimer. The cofactor is Mg(2+).

The protein resides in the cytoplasm. The enzyme catalyses (2R)-2-phosphoglycerate = phosphoenolpyruvate + H2O. Its pathway is carbohydrate degradation; glycolysis; pyruvate from D-glyceraldehyde 3-phosphate: step 4/5. The sequence is that of Enolase (ENO) from Schistosoma japonicum (Blood fluke).